Reading from the N-terminus, the 632-residue chain is ATP-dependent DNA helicase RecQ (632 aa).

The region spanning 47-215 is the Helicase ATP-binding domain; it reads IDATLMGKDS…LRHLNLQSPH (169 aa). Residue 60–67 participates in ATP binding; it reads MATGNGKS. The short motif at 159–162 is the DEAH box element; sequence DEAH. A Helicase C-terminal domain is found at 236–385; that stretch reads PMEQLCRFVL…IEALKLQAIG (150 aa). Residues Cys393, Cys410, Cys413, and Cys416 each coordinate Zn(2+). Residues 544-624 enclose the HRDC domain; the sequence is AQYDKDLFAR…QQHKKVLTQH (81 aa).

The protein belongs to the helicase family. RecQ subfamily. Mg(2+) serves as cofactor. The cofactor is Zn(2+).

The enzyme catalyses Couples ATP hydrolysis with the unwinding of duplex DNA by translocating in the 3'-5' direction.. It carries out the reaction ATP + H2O = ADP + phosphate + H(+). An ATP-dependent DNA helicase which unwinds DNA in a 3'-5' direction. Plays a role in recombination. This Pasteurella multocida (strain Pm70) protein is ATP-dependent DNA helicase RecQ.